A 402-amino-acid chain; its full sequence is 4-hydroxy-3-methylbut-2-en-1-yl diphosphate synthase (ferredoxin) (402 aa).

[4Fe-4S] cluster contacts are provided by cysteine 311, cysteine 314, cysteine 345, and glutamate 352.

This sequence belongs to the IspG family. [4Fe-4S] cluster serves as cofactor.

It carries out the reaction (2E)-4-hydroxy-3-methylbut-2-enyl diphosphate + 2 oxidized [2Fe-2S]-[ferredoxin] + H2O = 2-C-methyl-D-erythritol 2,4-cyclic diphosphate + 2 reduced [2Fe-2S]-[ferredoxin] + H(+). The protein operates within isoprenoid biosynthesis; isopentenyl diphosphate biosynthesis via DXP pathway; isopentenyl diphosphate from 1-deoxy-D-xylulose 5-phosphate: step 5/6. In terms of biological role, converts 2C-methyl-D-erythritol 2,4-cyclodiphosphate (ME-2,4cPP) into 1-hydroxy-2-methyl-2-(E)-butenyl 4-diphosphate, using ferredoxin I (PetF) as the reducing agent. The sequence is that of 4-hydroxy-3-methylbut-2-en-1-yl diphosphate synthase (ferredoxin) from Thermosynechococcus vestitus (strain NIES-2133 / IAM M-273 / BP-1).